The following is a 125-amino-acid chain: Small ribosomal subunit protein uS13 (125 aa).

Positions 95–125 are disordered; it reads GLPLRGQRTKTNARTRKGKRKTVANKKIASK.

This sequence belongs to the universal ribosomal protein uS13 family. As to quaternary structure, part of the 30S ribosomal subunit. Forms a loose heterodimer with protein S19. Forms two bridges to the 50S subunit in the 70S ribosome.

Located at the top of the head of the 30S subunit, it contacts several helices of the 16S rRNA. In the 70S ribosome it contacts the 23S rRNA (bridge B1a) and protein L5 of the 50S subunit (bridge B1b), connecting the 2 subunits; these bridges are implicated in subunit movement. Contacts the tRNAs in the A and P-sites. The polypeptide is Small ribosomal subunit protein uS13 (Borrelia garinii subsp. bavariensis (strain ATCC BAA-2496 / DSM 23469 / PBi) (Borreliella bavariensis)).